Reading from the N-terminus, the 198-residue chain is dCTP deaminase (198 aa).

Residues 99–104 (RSSLGR), 125–127 (TLE), and glutamine 144 contribute to the dCTP site. Glutamate 127 functions as the Proton donor/acceptor in the catalytic mechanism.

This sequence belongs to the dCTP deaminase family. As to quaternary structure, homotrimer.

It carries out the reaction dCTP + H2O + H(+) = dUTP + NH4(+). The protein operates within pyrimidine metabolism; dUMP biosynthesis; dUMP from dCTP (dUTP route): step 1/2. Functionally, catalyzes the deamination of dCTP to dUTP. This is dCTP deaminase from Rhodopirellula baltica (strain DSM 10527 / NCIMB 13988 / SH1).